A 754-amino-acid polypeptide reads, in one-letter code: Leucine-rich repeat-containing protein 36 (754 aa).

LRR repeat units follow at residues Asn-51–Cys-72 and Ser-73–Gln-94. Residues Asn-107 to His-146 enclose the LRRCT domain. The segment covering Arg-241–His-255 has biased composition (basic and acidic residues). The segment at Arg-241–Thr-270 is disordered. Positions Asn-600–Ser-680 form a coiled coil. The segment at Tyr-702–Ala-734 is disordered. Residues Phe-722 to Pro-732 show a composition bias toward polar residues.

This is Leucine-rich repeat-containing protein 36 (LRRC36) from Homo sapiens (Human).